A 487-amino-acid polypeptide reads, in one-letter code: MPN domain-containing protein (487 aa).

The tract at residues 1–55 (MAAPESLSPGATAEEAPEEDEDDAEAEDPERGTGSGGRSGSLGGSGGGTAGPGMA) is disordered. Position 2 is an N-acetylalanine (A2). At S8 the chain carries Phosphoserine. Over residues 15 to 28 (EAPEEDEDDAEAED) the composition is skewed to acidic residues. A compositionally biased stretch (gly residues) spans 33-55 (TGSGGRSGSLGGSGGGTAGPGMA). Positions 61-156 (TRRAVTLRVL…KYKAAWLRRH (96 aa)) constitute an RAMA domain. DNA contacts are provided by S113, S115, and W135. Positions 163–217 (ATADESPTSEGEEEELLLEEEEEDVLAGVSSEDKGHRPPGKGSLEPEATPPGKRM) are disordered. S168 and S171 each carry phosphoserine. Acidic residues predominate over residues 172–187 (EGEEEELLLEEEEEDV). The MPN domain maps to 258-393 (VAVSSNVLFL…PESKICPFWV (136 aa)). Positions 335, 337, and 348 each coordinate Zn(2+). A JAMM motif motif is present at residues 335 to 348 (HSHPHSPAVPSLQD).

This sequence belongs to the peptidase M67 family. Monomer. Mainly monomoric, but when binds to dsDNA, forms homotetramer assembled into two homodimers. May interact with histones; this interaction is facilitated by. Degraded following binding to N(6)-methyladenosine methylated DNA (m6A).

Probable protease. Acts as a sensor of N(6)-methyladenosine methylation on DNA (m6A): recognizes and binds m6A DNA, leading to its degradation. Binds only double strand DNA (dsDNA) in a sequence-independent manner. The sequence is that of MPN domain-containing protein from Mus musculus (Mouse).